We begin with the raw amino-acid sequence, 230 residues long: Large ribosomal subunit protein uL1 (230 aa).

The protein belongs to the universal ribosomal protein uL1 family. Part of the 50S ribosomal subunit.

Its function is as follows. Binds directly to 23S rRNA. The L1 stalk is quite mobile in the ribosome, and is involved in E site tRNA release. In terms of biological role, protein L1 is also a translational repressor protein, it controls the translation of the L11 operon by binding to its mRNA. This Nitrosomonas europaea (strain ATCC 19718 / CIP 103999 / KCTC 2705 / NBRC 14298) protein is Large ribosomal subunit protein uL1.